The chain runs to 347 residues: MPLNRVREAIEAIKKGEMIIMMDDEDRENEGDLVYAAAFSTPEKVNFMVSEAKGLVCVCVTSTCSDRLGLAPMVRENNSQHETAFTVSIDARECSTGISAFERDLTIRKMVDGTSKPEDFVRPGHIFPLIAKEGGVLVRTGHTEGSVDICKLAGVAPVAVICEIIKKDGHMARRDDLMEFAKEHHLKIVYISDLIEYRMQNEMLILIKERSEVEFLGKRAERYVFQDHHRREHTLYAFGKIIDNSLVKYHTVGKDLSLLESEKKYSTLMQAIKKIQEENGLIIFMDTPQNAAPQIKDFGIGAQMLRFLGIKNFRLLTSEENREYVGLSGFGLNVTEKIVLQGGPIQL.

Positions 1 to 200 (MPLNRVREAI…ISDLIEYRMQ (200 aa)) are DHBP synthase. Residues 27-28 (RE), Asp-32, 139-143 (RTGHT), and Glu-163 each bind D-ribulose 5-phosphate. Residue Glu-28 participates in Mg(2+) binding. His-142 is a binding site for Mg(2+). Residues 201-347 (NEMLILIKER…IVLQGGPIQL (147 aa)) are GTP cyclohydrolase II-like.

It in the N-terminal section; belongs to the DHBP synthase family. In the C-terminal section; belongs to the GTP cyclohydrolase II family. Mg(2+) is required as a cofactor. Requires Mn(2+) as cofactor.

It carries out the reaction D-ribulose 5-phosphate = (2S)-2-hydroxy-3-oxobutyl phosphate + formate + H(+). Its pathway is cofactor biosynthesis; riboflavin biosynthesis; 2-hydroxy-3-oxobutyl phosphate from D-ribulose 5-phosphate: step 1/1. In terms of biological role, catalyzes the conversion of D-ribulose 5-phosphate to formate and 3,4-dihydroxy-2-butanone 4-phosphate. This Wolinella succinogenes (strain ATCC 29543 / DSM 1740 / CCUG 13145 / JCM 31913 / LMG 7466 / NCTC 11488 / FDC 602W) (Vibrio succinogenes) protein is 3,4-dihydroxy-2-butanone 4-phosphate synthase (ribB).